Consider the following 191-residue polypeptide: Penicillin-binding protein activator LpoB (191 aa).

Positions 1-16 (MKRILFVILSTMLLAS) are cleaved as a signal peptide. Residue C17 is the site of N-palmitoyl cysteine attachment. Residue C17 is the site of S-diacylglycerol cysteine attachment. Residues 25–48 (QPAPVTPVEPKEKQETTPIEPSEK) form a disordered region.

It belongs to the LpoB family. In terms of assembly, interacts with PBP1b.

The protein resides in the cell outer membrane. Functionally, regulator of peptidoglycan synthesis that is essential for the function of penicillin-binding protein 1B (PBP1b). This is Penicillin-binding protein activator LpoB from Xenorhabdus nematophila (strain ATCC 19061 / DSM 3370 / CCUG 14189 / LMG 1036 / NCIMB 9965 / AN6).